The chain runs to 631 residues: Phosphomethylpyrimidine synthase (631 aa).

Substrate contacts are provided by residues Asn-239, Met-268, Tyr-297, His-333, 353 to 355 (SRG), 394 to 397 (DGLR), and Glu-433. His-437 serves as a coordination point for Zn(2+). Residue Tyr-460 coordinates substrate. Zn(2+) is bound at residue His-501. [4Fe-4S] cluster-binding residues include Cys-581, Cys-584, and Cys-589.

Belongs to the ThiC family. In terms of assembly, homodimer. Requires [4Fe-4S] cluster as cofactor.

The catalysed reaction is 5-amino-1-(5-phospho-beta-D-ribosyl)imidazole + S-adenosyl-L-methionine = 4-amino-2-methyl-5-(phosphooxymethyl)pyrimidine + CO + 5'-deoxyadenosine + formate + L-methionine + 3 H(+). It functions in the pathway cofactor biosynthesis; thiamine diphosphate biosynthesis. In terms of biological role, catalyzes the synthesis of the hydroxymethylpyrimidine phosphate (HMP-P) moiety of thiamine from aminoimidazole ribotide (AIR) in a radical S-adenosyl-L-methionine (SAM)-dependent reaction. In Klebsiella pneumoniae (strain 342), this protein is Phosphomethylpyrimidine synthase.